The primary structure comprises 434 residues: Enolase (434 aa).

Position 166 (Gln166) interacts with (2R)-2-phosphoglycerate. Catalysis depends on Glu208, which acts as the Proton donor. 3 residues coordinate Mg(2+): Asp245, Glu290, and Asp317. The (2R)-2-phosphoglycerate site is built by Lys342, Arg371, Ser372, and Lys393. Catalysis depends on Lys342, which acts as the Proton acceptor.

The protein belongs to the enolase family. Mg(2+) serves as cofactor.

It localises to the cytoplasm. The protein localises to the secreted. Its subcellular location is the cell surface. It catalyses the reaction (2R)-2-phosphoglycerate = phosphoenolpyruvate + H2O. It participates in carbohydrate degradation; glycolysis; pyruvate from D-glyceraldehyde 3-phosphate: step 4/5. Its function is as follows. Catalyzes the reversible conversion of 2-phosphoglycerate (2-PG) into phosphoenolpyruvate (PEP). It is essential for the degradation of carbohydrates via glycolysis. The protein is Enolase of Caldicellulosiruptor saccharolyticus (strain ATCC 43494 / DSM 8903 / Tp8T 6331).